Reading from the N-terminus, the 378-residue chain is Chaperone protein DnaJ (378 aa).

A J domain is found at 5-70; it reads DYYQILGIPK…EKRTAYDQYG (66 aa). The segment at 133 to 211 adopts a CR-type zinc-finger fold; sequence GTTKEIRIPT…CRGQGRIKTN (79 aa). The Zn(2+) site is built by Cys146, Cys149, Cys163, Cys166, Cys185, Cys188, Cys199, and Cys202. CXXCXGXG motif repeat units lie at residues 146–153, 163–170, 185–192, and 199–206; these read CKTCYGMG, CSTCHGKG, CPTCNGIG, and CRMCRGQG.

Belongs to the DnaJ family. In terms of assembly, homodimer. It depends on Zn(2+) as a cofactor.

Its subcellular location is the cytoplasm. Functionally, participates actively in the response to hyperosmotic and heat shock by preventing the aggregation of stress-denatured proteins and by disaggregating proteins, also in an autonomous, DnaK-independent fashion. Unfolded proteins bind initially to DnaJ; upon interaction with the DnaJ-bound protein, DnaK hydrolyzes its bound ATP, resulting in the formation of a stable complex. GrpE releases ADP from DnaK; ATP binding to DnaK triggers the release of the substrate protein, thus completing the reaction cycle. Several rounds of ATP-dependent interactions between DnaJ, DnaK and GrpE are required for fully efficient folding. Also involved, together with DnaK and GrpE, in the DNA replication of plasmids through activation of initiation proteins. The chain is Chaperone protein DnaJ from Buchnera aphidicola subsp. Schizaphis graminum (strain Sg).